The chain runs to 479 residues: MALSKNTKLVILMAIPLITFLLPAPDGLSLIAWRLLGVYIATIVGLVLKPYGEPVILLAAIAVSGVIIGNTEGAKELVKVGNMLDGYKSGTTWLIFTAFTLSSAFVITGLGKRIAYHMIGAMGSTTLRLGYVTMFLDLLLSPATPSNTARSGGIIFPIINSVVVALGSDPEKSPKKAGRYLMMNVYMVVKTTSYIFLTAMAPNALALSLMAPILGFETTWIKWFLAASVPGLLCLFLIPLICYWVSPPELKKVDNKAIAKKGLEELGPMSFREKALSVLFVIALFGWIFSNSLHINATIVAIIVMVLCIVLSIVTWDDILKSKGAWNTLVWYGGIIGMSGLLEKSGFFKWLANTLSTILQFEGHGMMALIVILTLSVSVRYLFASGGAYVAAMVPVFATVGHVTGAPTELLALGLVFANSYGGSVTHYGGGPGPIAFGAGYNDIKSWWITGAIIAFGSLIIHLTIGMAWWKLLMSLGWL.

Transmembrane regions (helical) follow at residues 11-31 (ILMA…LSLI), 43-63 (IVGL…AIAV), 90-110 (GTTW…ITGL), 151-171 (SGGI…SDPE), 195-215 (IFLT…PILG), 223-243 (WFLA…LICY), 274-294 (KALS…NSLH), 295-315 (INAT…SIVT), 328-348 (TLVW…SGFF), and 447-467 (WWIT…TIGM).

The protein belongs to the SLC13A/DASS transporter (TC 2.A.47) family. DIT1 subfamily.

The protein localises to the cell inner membrane. This is an uncharacterized protein from Haemophilus influenzae (strain ATCC 51907 / DSM 11121 / KW20 / Rd).